Here is a 318-residue protein sequence, read N- to C-terminus: uncharacterized protein (318 aa).

It belongs to the glycosyltransferase 2 family.

This is an uncharacterized protein from Rickettsia typhi (strain ATCC VR-144 / Wilmington).